The sequence spans 323 residues: Methenyltetrahydromethanopterin cyclohydrolase (323 aa).

Belongs to the MCH family.

The protein localises to the cytoplasm. It carries out the reaction 5,10-methenyl-5,6,7,8-tetrahydromethanopterin + H2O = N(5)-formyl-5,6,7,8-tetrahydromethanopterin + H(+). The protein operates within one-carbon metabolism; methanogenesis from CO(2); 5,10-methenyl-5,6,7,8-tetrahydromethanopterin from CO(2): step 3/3. Catalyzes the reversible interconversion of 5-formyl-H(4)MPT to methenyl-H(4)MPT(+). The protein is Methenyltetrahydromethanopterin cyclohydrolase of Methanococcus maripaludis (strain DSM 14266 / JCM 13030 / NBRC 101832 / S2 / LL).